The sequence spans 360 residues: sn-glycerol-3-phosphate import ATP-binding protein UgpC (360 aa).

Residues 4-235 (LSLKGVRKSY…PATTFVASFI (232 aa)) enclose the ABC transporter domain. ATP is bound at residue 37–44 (GPSGCGKS).

Belongs to the ABC transporter superfamily. sn-glycerol-3-phosphate importer (TC 3.A.1.1.3) family. In terms of assembly, the complex is composed of two ATP-binding proteins (UgpC), two transmembrane proteins (UgpA and UgpE) and a solute-binding protein (UgpB).

Its subcellular location is the cell inner membrane. The enzyme catalyses sn-glycerol 3-phosphate(out) + ATP + H2O = sn-glycerol 3-phosphate(in) + ADP + phosphate + H(+). Its function is as follows. Part of the ABC transporter complex UgpBAEC involved in sn-glycerol-3-phosphate (G3P) import. Responsible for energy coupling to the transport system. The protein is sn-glycerol-3-phosphate import ATP-binding protein UgpC of Burkholderia pseudomallei (strain K96243).